Reading from the N-terminus, the 320-residue chain is Geranylgeranyl pyrophosphate synthase (320 aa).

3 residues coordinate isopentenyl diphosphate: Lys35, Arg38, and His67. The Mg(2+) site is built by Asp74 and Asp78. Arg83 provides a ligand contact to dimethylallyl diphosphate. Arg84 is a binding site for isopentenyl diphosphate. Dimethylallyl diphosphate contacts are provided by Lys168, Thr169, Gln206, Lys223, and Lys233.

This sequence belongs to the FPP/GGPP synthase family. It depends on Mg(2+) as a cofactor.

The protein resides in the cytoplasm. It carries out the reaction isopentenyl diphosphate + dimethylallyl diphosphate = (2E)-geranyl diphosphate + diphosphate. It catalyses the reaction isopentenyl diphosphate + (2E)-geranyl diphosphate = (2E,6E)-farnesyl diphosphate + diphosphate. The catalysed reaction is isopentenyl diphosphate + (2E,6E)-farnesyl diphosphate = (2E,6E,10E)-geranylgeranyl diphosphate + diphosphate. The protein operates within isoprenoid biosynthesis; farnesyl diphosphate biosynthesis; farnesyl diphosphate from geranyl diphosphate and isopentenyl diphosphate: step 1/1. Its pathway is isoprenoid biosynthesis; geranyl diphosphate biosynthesis; geranyl diphosphate from dimethylallyl diphosphate and isopentenyl diphosphate: step 1/1. It functions in the pathway isoprenoid biosynthesis; geranylgeranyl diphosphate biosynthesis; geranylgeranyl diphosphate from farnesyl diphosphate and isopentenyl diphosphate: step 1/1. In terms of biological role, catalyzes the trans-addition of the 3 molecules of IPP onto DMAPP to form geranylgeranyl pyrophosphate. May be involved in vesicle trafficking and protein sorting. The chain is Geranylgeranyl pyrophosphate synthase (BTS1) from Eremothecium gossypii (strain ATCC 10895 / CBS 109.51 / FGSC 9923 / NRRL Y-1056) (Yeast).